We begin with the raw amino-acid sequence, 1148 residues long: Small G protein signaling modulator 1 (1148 aa).

The region spanning 36–190 is the RUN domain; that stretch reads HEDSSHIISF…EYTKMKTADH (155 aa). The important for interaction with RAB9A and RAB9B stretch occupies residues 256–297; it reads LLYGKNNVLVQPRDDMEAVPGYLSLHQTADVMTLKWTPNQLM. Positions 301 to 350 are required for interaction with RAP family members; that stretch reads VGDLDYEKSVYWDYAMTIRLEEIVYLHCHQQVDSGGTVVLVSQDGIQRPP. Disordered stretches follow at residues 377–411, 700–830, and 871–894; these read DPPLWSQRGKGKVFPKLRKRSPQGSAESTSSDKDD, DSTI…PREE, and GWRSSETEKHGQADSEDNLSEEPE. Residues 385–397 show a composition bias toward basic residues; sequence GKGKVFPKLRKRS. Residues 617–1081 enclose the Rab-GAP TBC domain; the sequence is GIQPEIRKAV…LVWETIWAAK (465 aa). The segment covering 702-716 has biased composition (polar residues); the sequence is TISNESSQSCSSGRQ. Basic and acidic residues predominate over residues 742–751; the sequence is AEGRLEEKQP. Positions 757–802 are enriched in polar residues; that stretch reads NLVNGTCSPDSGHPSSHNFSSGLSEHSEPSLSTEDSVLDAQRNTPT. Composition is skewed to basic and acidic residues over residues 805–816 and 871–883; these read RPRDGSVDDRQS and GWRSSETEKHGQA. Acidic residues predominate over residues 884 to 894; the sequence is DSEDNLSEEPE.

Belongs to the RUTBC family. In terms of assembly, interacts with RAB9A (GTP-bound form) and RAB9B (GTP-bound form); has much lower affinity for GDP-bound RAB9A and RAB9B. Interacts with RAB3A, RAB4A, RAB5A, RAB8A, RAB11A, RAP1A, RAP1B, RAP2A and RAP2B. No interaction with RAB27A. Mainly expressed in brain, heart and testis.

Its subcellular location is the golgi apparatus. It is found in the trans-Golgi network. The protein localises to the cytoplasmic vesicle membrane. The protein resides in the cytoplasm. Interacts with numerous Rab family members, functioning as Rab effector for some, and as GTPase activator for others. Promotes GTP hydrolysis by RAB34 and RAB36. Probably functions as a GTPase effector with RAB9A and RAB9B; does not stimulate GTP hydrolysis with RAB9A and RAB9B. The polypeptide is Small G protein signaling modulator 1 (SGSM1) (Homo sapiens (Human)).